The following is a 249-amino-acid chain: MKPVLFELFGLKIYGYGAMIALGILAAVILLDKRSKKRGYNEDHIFNMAIVGIIGGILGGKLLYIIVDIKNIIDNPEILKDLGNGFVIYGAIIGGAISVYLYCKKKNWDVLKMLDLVVPSVALAQGFGRIGCFLAGCCYGKPTKLPIGVMFTNSPFAPSNIHLHPTQIYSSIFDFLLAFFLLWYSRKAEKSGRVFSLYVIIYGVGRVIVEFLRGDPRGNVSMLSTSQFISLFTIIIGIFVFNIDRFRKQ.

Helical transmembrane passes span 11 to 31 (LKIY…VILL), 49 to 69 (AIVG…IVDI), 82 to 102 (LGNG…VYLY), 116 to 136 (LVVP…FLAG), 163 to 183 (LHPT…FLLW), 192 to 212 (GRVF…VEFL), and 223 to 243 (LSTS…VFNI). A 1,2-diacyl-sn-glycero-3-phospho-(1'-sn-glycerol) is bound at residue Arg-129.

The protein belongs to the Lgt family.

Its subcellular location is the cell membrane. It catalyses the reaction L-cysteinyl-[prolipoprotein] + a 1,2-diacyl-sn-glycero-3-phospho-(1'-sn-glycerol) = an S-1,2-diacyl-sn-glyceryl-L-cysteinyl-[prolipoprotein] + sn-glycerol 1-phosphate + H(+). Its pathway is protein modification; lipoprotein biosynthesis (diacylglyceryl transfer). Functionally, catalyzes the transfer of the diacylglyceryl group from phosphatidylglycerol to the sulfhydryl group of the N-terminal cysteine of a prolipoprotein, the first step in the formation of mature lipoproteins. The sequence is that of Phosphatidylglycerol--prolipoprotein diacylglyceryl transferase from Clostridium tetani (strain Massachusetts / E88).